A 178-amino-acid polypeptide reads, in one-letter code: Imidazoleglycerol-phosphate dehydratase (178 aa).

This sequence belongs to the imidazoleglycerol-phosphate dehydratase family.

The protein resides in the cytoplasm. The catalysed reaction is D-erythro-1-(imidazol-4-yl)glycerol 3-phosphate = 3-(imidazol-4-yl)-2-oxopropyl phosphate + H2O. It functions in the pathway amino-acid biosynthesis; L-histidine biosynthesis; L-histidine from 5-phospho-alpha-D-ribose 1-diphosphate: step 6/9. This chain is Imidazoleglycerol-phosphate dehydratase, found in Archaeoglobus fulgidus (strain ATCC 49558 / DSM 4304 / JCM 9628 / NBRC 100126 / VC-16).